The primary structure comprises 156 residues: Endoribonuclease YbeY (156 aa).

Positions 114, 118, and 124 each coordinate Zn(2+).

It belongs to the endoribonuclease YbeY family. Requires Zn(2+) as cofactor.

Its subcellular location is the cytoplasm. Functionally, single strand-specific metallo-endoribonuclease involved in late-stage 70S ribosome quality control and in maturation of the 3' terminus of the 16S rRNA. The protein is Endoribonuclease YbeY of Sodalis glossinidius (strain morsitans).